The chain runs to 194 residues: uncharacterized protein (194 aa).

The protein belongs to the mimivirus R457/R459 family.

It is found in the virion. This is an uncharacterized protein from Acanthamoeba polyphaga mimivirus (APMV).